We begin with the raw amino-acid sequence, 520 residues long: Probable alginate O-acetylase AlgI (520 aa).

Helical transmembrane passes span 7-24, 39-61, 78-100, 115-137, 150-172, 239-261, 311-333, 353-375, 402-424, and 483-505; these read VFLFLFLPVFLGLYYLSG, FYAWWRVDFLLLFAGVTVFNYWI, WLILGVVVDLCVLGYFKYANFGV, FVLTHILLPIGISFYTFESISYI, NLIDFAAFVAIFPHLIAGPVLRF, LYFDFSGYSDMAIGLGLMMGFRF, LFLTMLLGGLWHGANFTYIIWGA, VLNPLKWVITFLLVVIGWVIFRA, ANLTGLQVGTLVLAYLVLAFFGL, and WLSQLPVLATRLALLLLFAASVL. Histidine 322 is a catalytic residue.

It belongs to the membrane-bound acyltransferase family.

It is found in the cell inner membrane. It functions in the pathway glycan biosynthesis; alginate biosynthesis. Its function is as follows. Together with AlgJ and AlgF, forms an inner membrane complex which probably interacts with the alginate polymerization-transport complex and adds acetyl groups at the O-2 and O-3 positions of mannuronate residues. Acetylation of alginate is important for the architecture of biofilms and increases resistance to opsonic killing in the host. The polypeptide is Probable alginate O-acetylase AlgI (algI) (Pseudomonas aeruginosa (strain ATCC 15692 / DSM 22644 / CIP 104116 / JCM 14847 / LMG 12228 / 1C / PRS 101 / PAO1)).